Reading from the N-terminus, the 80-residue chain is Transcription elongation factor 1 homolog (80 aa).

Zn(2+) is bound by residues Cys-25, Cys-28, Cys-49, and Cys-52.

It belongs to the ELOF1 family.

The protein resides in the nucleus. Functionally, transcription elongation factor implicated in the maintenance of proper chromatin structure in actively transcribed regions. This Encephalitozoon cuniculi (strain GB-M1) (Microsporidian parasite) protein is Transcription elongation factor 1 homolog.